Reading from the N-terminus, the 611-residue chain is UvrABC system protein C (611 aa).

The 79-residue stretch at Q19–V97 folds into the GIY-YIG domain. A UVR domain is found at N207–V242.

This sequence belongs to the UvrC family. Interacts with UvrB in an incision complex.

Its subcellular location is the cytoplasm. The UvrABC repair system catalyzes the recognition and processing of DNA lesions. UvrC both incises the 5' and 3' sides of the lesion. The N-terminal half is responsible for the 3' incision and the C-terminal half is responsible for the 5' incision. The sequence is that of UvrABC system protein C from Alkalilimnicola ehrlichii (strain ATCC BAA-1101 / DSM 17681 / MLHE-1).